We begin with the raw amino-acid sequence, 123 residues long: Large ribosomal subunit protein uL14 (123 aa).

It belongs to the universal ribosomal protein uL14 family. Part of the 50S ribosomal subunit. Forms a cluster with proteins L3 and L19. In the 70S ribosome, L14 and L19 interact and together make contacts with the 16S rRNA in bridges B5 and B8.

Functionally, binds to 23S rRNA. Forms part of two intersubunit bridges in the 70S ribosome. The polypeptide is Large ribosomal subunit protein uL14 (Proteus mirabilis (strain HI4320)).